Here is a 947-residue protein sequence, read N- to C-terminus: DEAD-box ATP-dependent RNA helicase 45 (947 aa).

Residues 1 to 14 (MEEEEVVVVVDEEE) are compositionally biased toward acidic residues. Disordered stretches follow at residues 1 to 132 (MEEE…EDEI) and 159 to 221 (SMPA…EEFM). 2 stretches are compositionally biased toward basic and acidic residues: residues 15–31 (SERR…KRLD) and 42–61 (KEWQ…REQE). Over residues 62–82 (AAAGAGTPAAAAGADGDSNAG) the composition is skewed to low complexity. 2 stretches are compositionally biased toward acidic residues: residues 88–108 (DGEE…EDDG) and 196–219 (DDSD…DDEE). Positions 285–313 (KTWVQSGLTSKLLDTIKKLGFEKPMPIQA) match the Q motif motif. Positions 316–494 (LPIIMSGRDC…RKVLTKPVEI (179 aa)) constitute a Helicase ATP-binding domain. ATP is bound at residue 329-336 (AKTGSGKT). The DEAD box signature appears at 442–445 (DEAD). The region spanning 479–647 (QVEILARKVL…AVPQDLKGLA (169 aa)) is the Helicase C-terminal domain. Residues 658-710 (TEQAHGTGYGGSGFKFNEEEDEARRSAKKAQAREYGYEEDKSDSDSDEEGGVR) form a disordered region. The span at 697–706 (DKSDSDSDEE) shows a compositional bias: acidic residues. A coiled-coil region spans residues 854-879 (TELSVKKAKSELKRVLEDCANHALNL).

It belongs to the DEAD box helicase family. DDX46/PRP5 subfamily.

The enzyme catalyses ATP + H2O = ADP + phosphate + H(+). This is DEAD-box ATP-dependent RNA helicase 45 from Oryza sativa subsp. japonica (Rice).